The sequence spans 76 residues: Brevinin-2ISa (76 aa).

The signal sequence occupies residues 1–22 (MFNMKKSLLLLFFLGTISLSLC). Residues 23 to 41 (EEERDADEDDGVEMTEEEV) constitute a propeptide, removed in mature form. A disulfide bridge links C70 with C76.

As to expression, expressed by the skin glands.

Its subcellular location is the secreted. In terms of biological role, has antimicrobial activity against Gram-negative bacterium E.coli ATCC 8739 (MIC=50 ug), against Gram positive bacteria S.aureus ATCC 6538 (MIC=12.5 ug), methicillin-resistant S.aureus ATCC 43300 (MIC=100 ug) and B.subtilis ATCC 6633 (MIC=12.5 ug). Has no activity against fungus C.albicans ATCC 90028. In Odorrana ishikawae (Ishikawa's frog), this protein is Brevinin-2ISa.